We begin with the raw amino-acid sequence, 276 residues long: Ribosomal RNA small subunit methyltransferase A (276 aa).

N27, L29, G54, E75, D101, and N122 together coordinate S-adenosyl-L-methionine.

This sequence belongs to the class I-like SAM-binding methyltransferase superfamily. rRNA adenine N(6)-methyltransferase family. RsmA subfamily.

Its subcellular location is the cytoplasm. The catalysed reaction is adenosine(1518)/adenosine(1519) in 16S rRNA + 4 S-adenosyl-L-methionine = N(6)-dimethyladenosine(1518)/N(6)-dimethyladenosine(1519) in 16S rRNA + 4 S-adenosyl-L-homocysteine + 4 H(+). Functionally, specifically dimethylates two adjacent adenosines (A1518 and A1519) in the loop of a conserved hairpin near the 3'-end of 16S rRNA in the 30S particle. May play a critical role in biogenesis of 30S subunits. The sequence is that of Ribosomal RNA small subunit methyltransferase A from Brucella suis (strain ATCC 23445 / NCTC 10510).